Here is a 600-residue protein sequence, read N- to C-terminus: Adenine deaminase (600 aa).

The protein belongs to the metallo-dependent hydrolases superfamily. Adenine deaminase family. Mn(2+) serves as cofactor.

It carries out the reaction adenine + H2O + H(+) = hypoxanthine + NH4(+). This chain is Adenine deaminase, found in Chelativorans sp. (strain BNC1).